We begin with the raw amino-acid sequence, 1155 residues long: RHO1 GDP-GTP exchange protein 1 (1155 aa).

Position 1 is an N-acetylmethionine (M1). The span at N100 to S143 shows a compositional bias: polar residues. A disordered region spans residues N100–S249. Residues S154 and S155 each carry the phosphoserine modification. The segment covering S155–S167 has biased composition (low complexity). Residue T180 is modified to Phosphothreonine. Positions L190–S227 are enriched in low complexity. Over residues Q228–S243 the composition is skewed to basic residues. S433 is subject to Phosphoserine. A DH domain is found at K464 to A651. The 296-residue stretch at T842–I1137 folds into the CNH domain.

In terms of biological role, stimulates the exchange of RHO1 GDP-bound form into GTP-bound form. This Saccharomyces cerevisiae (strain ATCC 204508 / S288c) (Baker's yeast) protein is RHO1 GDP-GTP exchange protein 1 (ROM1).